Here is a 189-residue protein sequence, read N- to C-terminus: NADH-quinone oxidoreductase subunit B (189 aa).

The [4Fe-4S] cluster site is built by C39, C40, C104, and C135.

It belongs to the complex I 20 kDa subunit family. As to quaternary structure, NDH-1 is composed of 14 different subunits. Subunits NuoB, C, D, E, F, and G constitute the peripheral sector of the complex. [4Fe-4S] cluster serves as cofactor.

The protein localises to the cell inner membrane. The enzyme catalyses a quinone + NADH + 5 H(+)(in) = a quinol + NAD(+) + 4 H(+)(out). Functionally, NDH-1 shuttles electrons from NADH, via FMN and iron-sulfur (Fe-S) centers, to quinones in the respiratory chain. The immediate electron acceptor for the enzyme in this species is believed to be a menaquinone. Couples the redox reaction to proton translocation (for every two electrons transferred, four hydrogen ions are translocated across the cytoplasmic membrane), and thus conserves the redox energy in a proton gradient. This Chlorobium phaeovibrioides (strain DSM 265 / 1930) (Prosthecochloris vibrioformis (strain DSM 265)) protein is NADH-quinone oxidoreductase subunit B.